A 73-amino-acid polypeptide reads, in one-letter code: Waprin-Phi2 (73 aa).

Residues 1-21 (MKATLLLLLLFAVILPGTISA) form the signal peptide. Positions 22–72 (EQEKPGSCPNVDMPIPPLGLCKTTCSKDSDCSETKKCCKNGCGFMTCTTAR) constitute a WAP domain. Disulfide bonds link Cys29–Cys59, Cys42–Cys63, Cys46–Cys58, and Cys52–Cys68.

This sequence belongs to the venom waprin family. In terms of tissue distribution, expressed by the venom gland.

The protein resides in the secreted. Its function is as follows. Damages membranes of susceptible bacteria. Has no hemolytic activity. Not toxic to mice. Does not inhibit the proteinases elastase and cathepsin G. This chain is Waprin-Phi2, found in Philodryas olfersii (Green snake).